Reading from the N-terminus, the 82-residue chain is Small ribosomal subunit protein bS18 (82 aa).

Positions 1-20 are disordered; sequence MSEASSAPVRRPFHRRRKTC.

This sequence belongs to the bacterial ribosomal protein bS18 family. As to quaternary structure, part of the 30S ribosomal subunit. Forms a tight heterodimer with protein bS6.

In terms of biological role, binds as a heterodimer with protein bS6 to the central domain of the 16S rRNA, where it helps stabilize the platform of the 30S subunit. The protein is Small ribosomal subunit protein bS18 of Rhizobium etli (strain CIAT 652).